The sequence spans 441 residues: Glutamate-1-semialdehyde 2,1-aminomutase (441 aa).

Lysine 270 bears the N6-(pyridoxal phosphate)lysine mark.

It belongs to the class-III pyridoxal-phosphate-dependent aminotransferase family. HemL subfamily. In terms of assembly, homodimer. Pyridoxal 5'-phosphate is required as a cofactor.

Its subcellular location is the cytoplasm. It carries out the reaction (S)-4-amino-5-oxopentanoate = 5-aminolevulinate. It participates in porphyrin-containing compound metabolism; protoporphyrin-IX biosynthesis; 5-aminolevulinate from L-glutamyl-tRNA(Glu): step 2/2. This chain is Glutamate-1-semialdehyde 2,1-aminomutase (hemL), found in Propionibacterium freudenreichii subsp. freudenreichii.